A 506-amino-acid chain; its full sequence is Aspartic proteinase A1 (506 aa).

A signal peptide spans 1-24; it reads MKIYSRTVAVSLIVSFLLCFSAFA. The propeptide at 25 to 64 is activation peptide; sequence ERNDGTFRVGLKKLKLDSKNRLAARVESKQEKPLRAYRLG. The region spanning 82–503 is the Peptidase A1 domain; the sequence is YYGEIAIGTP…DFGNEQVGFA (422 aa). D100 is a catalytic residue. Intrachain disulfides connect C113-C119 and C278-C282. Residue D287 is part of the active site. In terms of domain architecture, Saposin B-type spans 312–417; the sequence is VVSQQCKTVV…NELCERLPSP (106 aa). Disulfide bonds link C317-C411, C342-C383, C348-C380, and C425-C462. Residue N397 is glycosylated (N-linked (GlcNAc...) asparagine).

This sequence belongs to the peptidase A1 family. In terms of tissue distribution, expressed in roots, leaves, stems, petals, carpels, seed pods and dry seeds.

The protein resides in the vacuole. Functionally, involved in the breakdown of propeptides of storage proteins in protein-storage vacuoles. Possesses aspartic protease activity in vitro. In Arabidopsis thaliana (Mouse-ear cress), this protein is Aspartic proteinase A1 (APA1).